Consider the following 256-residue polypeptide: uncharacterized protein (256 aa).

A coiled-coil region spans residues Thr-213–Lys-243. The tract at residues Lys-231–Lys-256 is disordered. Over residues Pro-244–Lys-256 the composition is skewed to polar residues.

This is an uncharacterized protein from Acanthamoeba polyphaga (Amoeba).